Reading from the N-terminus, the 278-residue chain is Putative B3 domain-containing protein At2g21920 (278 aa).

The segment at residues 168–275 is a DNA-binding region (TF-B3); sequence ISKTLSRTDV…KFIILNFEYN (108 aa).

The protein resides in the nucleus. In Arabidopsis thaliana (Mouse-ear cress), this protein is Putative B3 domain-containing protein At2g21920.